A 341-amino-acid chain; its full sequence is Glyceraldehyde-3-phosphate dehydrogenase, cytosolic (341 aa).

NAD(+)-binding positions include 15–16, aspartate 37, and arginine 84; that span reads RI. Residues 155–157, threonine 186, 215–216, and arginine 238 each bind D-glyceraldehyde 3-phosphate; these read SCT and TG. Cysteine 156 serves as the catalytic Nucleophile. Asparagine 320 contacts NAD(+).

The protein belongs to the glyceraldehyde-3-phosphate dehydrogenase family. As to quaternary structure, homotetramer.

The protein resides in the cytoplasm. The catalysed reaction is D-glyceraldehyde 3-phosphate + phosphate + NAD(+) = (2R)-3-phospho-glyceroyl phosphate + NADH + H(+). It participates in carbohydrate degradation; glycolysis; pyruvate from D-glyceraldehyde 3-phosphate: step 1/5. In terms of biological role, key enzyme in glycolysis that catalyzes the first step of the pathway by converting D-glyceraldehyde 3-phosphate (G3P) into 3-phospho-D-glyceroyl phosphate. Essential for the maintenance of cellular ATP levels and carbohydrate metabolism. This chain is Glyceraldehyde-3-phosphate dehydrogenase, cytosolic (GAPC), found in Magnolia liliiflora (Mulan magnolia).